A 447-amino-acid polypeptide reads, in one-letter code: MLITKNNKKKIKKISKRGTNKAFLQKLLSVEKLTNLLKKKQRKVSLARKAQKKIYHKGKFKITDIISIPLRGEVIKRIIKPKLQGIDLVVDEMDHNPINDIEILFYTREQEEERRQEEPEDYPLDAWDKDVLGIVSEDEPQYKNPTDFIYHWEFGILHPVASFEEFFEIDFNHVALHKVDSYGDFAFYGNDPYVKTFEYPTEQYYISEEDAGQFEIDYLLHYSTKLERHSQYLLKRKENYNPKQPQILETDSRSEHYLMNYFYYNKLENVLEKKEGIDDAEVYKFIKLDFGEKMELKLEKFYDLNRERRFRVKKLSQSKLYEFEKAALKGIGFDCFMLIVGIIIFLASSPYLFSQLPWRVKYSLHNTWYHNLLEVIDVLFSMPKVINLEWLYLQAMWEGELTVLKIRGGISVLTAIETIMSVMSNYKDLSQTSQIINYLANFSFDIY.

It localises to the mitochondrion. This is an uncharacterized protein from Dictyostelium discoideum (Social amoeba).